Here is a 270-residue protein sequence, read N- to C-terminus: tRNA pseudouridine synthase A (270 aa).

D60 serves as the catalytic Nucleophile. An RNA binding region spans residues 107-111 (FHARF). Residue Y118 participates in substrate binding. The segment at 168–172 (QCQSR) is interaction with tRNA.

The protein belongs to the tRNA pseudouridine synthase TruA family. In terms of assembly, homodimer.

The catalysed reaction is uridine(38/39/40) in tRNA = pseudouridine(38/39/40) in tRNA. In terms of biological role, formation of pseudouridine at positions 38, 39 and 40 in the anticodon stem and loop of transfer RNAs. This chain is tRNA pseudouridine synthase A, found in Shigella boydii serotype 18 (strain CDC 3083-94 / BS512).